The primary structure comprises 395 residues: Type II restriction enzyme BsuFI (395 aa).

Homodimer. The cofactor is Mg(2+).

The enzyme catalyses Endonucleolytic cleavage of DNA to give specific double-stranded fragments with terminal 5'-phosphates.. Its function is as follows. A P subtype restriction enzyme that recognizes the double-stranded sequence 5'-CCGG-3' and cleaves after C-1. This Bacillus subtilis protein is Type II restriction enzyme BsuFI (hsdFR).